Here is a 362-residue protein sequence, read N- to C-terminus: Solute carrier family 25 member 3 (362 aa).

The N-terminal 49 residues, 1–49 (MFSSVAHLARANPFNTPHLQLVHDGLGDLRSSSPGPTGQPRRPRNLAAA), are a transit peptide targeting the mitochondrion. Residues 50–63 (AVEEQYSCDYGSGR) are Mitochondrial intermembrane-facing. Solcar repeat units follow at residues 63-147 (RFFI…FKVL), 160-244 (WRTS…TVEA), and 261-339 (EQLV…VKVY). The helical transmembrane segment at 64-86 (FFILCGLGGIISCGTTHTALVPL) threads the bilayer. Over 87–121 (DLVKCRMQVDPQKYKGIFNGFSVTLKEDGVRGLAK) the chain is Mitochondrial matrix. Lys-99 is modified (N6-acetyllysine). Lys-112 carries the post-translational modification N6-methyllysine. Residues 122–141 (GWAPTFLGYSMQGLCKFGFY) form a helical membrane-spanning segment. Residues 142–161 (EVFKVLYSNMLGEENTYLWR) lie on the Mitochondrial intermembrane side of the membrane. A helical membrane pass occupies residues 162-183 (TSLYLAASASAEFFADIALAPM). Topologically, residues 184 to 218 (EAAKVRIQTQPGYANTLRDAAPKMYKEEGLKAFYK) are mitochondrial matrix. Tyr-196 carries the phosphotyrosine modification. An N6-acetyllysine modification is found at Lys-209. The helical transmembrane segment at 219 to 238 (GVAPLWMRQIPYTMMKFACF) threads the bilayer. Residues 239–261 (ERTVEALYKFVVPKPRSECSKPE) lie on the Mitochondrial intermembrane side of the membrane. Residues 262-284 (QLVVTFVAGYIAGVFCAIVSHPA) form a helical membrane-spanning segment. Over 285 to 314 (DSVVSVLNKEKGSSASLVLKRLGFKGVWKG) the chain is Mitochondrial matrix. Residues 315–333 (LFARIIMIGTLTALQWFIY) traverse the membrane as a helical segment. At 334–362 (DSVKVYFRLPRPPPPEMPESLKKKLGLTQ) the chain is on the mitochondrial intermembrane side.

The protein belongs to the mitochondrial carrier (TC 2.A.29) family. In terms of assembly, interacts with PPIF; the interaction is impaired by CsA.

The protein localises to the mitochondrion inner membrane. The catalysed reaction is phosphate(in) + H(+)(in) = phosphate(out) + H(+)(out). Inorganic ion transporter that transports phosphate or copper ions across the mitochondrial inner membrane into the matrix compartment. Mediates proton-coupled symport of phosphate ions necessary for mitochondrial oxidative phosphorylation of ADP to ATP. Transports copper ions probably in the form of anionic copper(I) complexes to maintain mitochondrial matrix copper pool and to supply copper for cytochrome C oxidase complex assembly. May also play a role in regulation of the mitochondrial permeability transition pore (mPTP). This is Solute carrier family 25 member 3 from Homo sapiens (Human).